Consider the following 350-residue polypeptide: MENGDIPEDANEHCPGPQSESAGKSDSCAGCPNQEACATAPKGPDPDLVAIAERMSTVKHKILVLSGKGGVGKSTFSAQLSFALAGMDHQVGLMDIDICGPSIPKMLGLEGQEIHQSNLGWSPVYVEDNLGVMSIGFMLPNSDEAVIWRGPRKNGLIKQFLKDVYWGEIDYLVVDAPPGTSDEHISIVQYLLPTGIDGAIIVTTPQEVSLIDVRKEVSFCKKVGVPVLGVVENMSGLSQPLKDVKFMKLATETGSSINVTEDVIACLRKNAPELLDIVACSEVFDSSGGGAERMCREMGVPFLGKVPMDPQLCKAAEQGKSCFEDNKCLISAPALKSIIQKVVPSTVMTE.

The disordered stretch occupies residues 1–30 (MENGDIPEDANEHCPGPQSESAGKSDSCAG). Residues C14, C28, C31, and C37 each coordinate [4Fe-4S] cluster. 67–74 (GKGGVGKS) contributes to the ATP binding site.

This sequence belongs to the Mrp/NBP35 ATP-binding proteins family. NUBP1/NBP35 subfamily. In terms of assembly, homodimer and homotetramer. Predominantly homodimeric. Requires [4Fe-4S] cluster as cofactor.

It localises to the cytoplasm. Functionally, component of the cytosolic iron-sulfur (Fe-S) protein assembly (CIA) machinery. Required for maturation of extramitochondrial Fe-S proteins. Functions as a Fe-S scaffold, mediating the de novo assembly of an Fe-S cluster and its transfer to target apoproteins. Essential for embryo development. In Arabidopsis thaliana (Mouse-ear cress), this protein is Cytosolic Fe-S cluster assembly factor NBP35.